A 1820-amino-acid chain; its full sequence is Histone-lysine N-methyltransferase, H3 lysine-9 specific (1820 aa).

Disordered regions lie at residues Met-1–Arg-54, Asn-74–Thr-251, Ser-284–Lys-618, Ser-634–Val-681, Asn-804–Lys-836, Ser-850–Trp-893, His-911–Arg-944, Asp-966–Ala-996, Pro-1063–Val-1126, Arg-1183–Ala-1270, Lys-1296–Gln-1335, and Arg-1385–Asp-1407. Over residues Val-11 to Leu-31 the composition is skewed to low complexity. Residues Ala-109–Gln-129 show a composition bias toward polar residues. The span at Gly-152–Ala-169 shows a compositional bias: low complexity. Composition is skewed to polar residues over residues Gly-174–Asn-204 and Ser-212–Ala-222. Composition is skewed to low complexity over residues Arg-226–Arg-236, Ser-284–Thr-311, and Thr-339–Ala-352. Residues Lys-361–Arg-370 show a composition bias toward basic and acidic residues. Positions Ser-374–Gly-385 are enriched in polar residues. The span at Ser-400–Ala-424 shows a compositional bias: low complexity. The span at Ser-433–His-442 shows a compositional bias: polar residues. Low complexity predominate over residues Pro-443–Gln-459. The span at Thr-479 to Leu-510 shows a compositional bias: polar residues. Composition is skewed to low complexity over residues Pro-514–Thr-531, Gln-551–Ser-563, and Thr-594–Lys-618. 2 stretches are compositionally biased toward polar residues: residues Gly-643–Ser-662 and Ser-810–Ser-827. Positions Ser-850 to Gly-861 are enriched in low complexity. Residues Thr-869–Trp-893 show a composition bias toward polar residues. 2 stretches are compositionally biased toward basic and acidic residues: residues Lys-917 to Arg-944 and Asp-966 to Lys-983. A compositionally biased stretch (low complexity) spans Ser-1076–Ser-1089. The segment covering Lys-1296 to Leu-1320 has biased composition (low complexity). The Pre-SET domain occupies Leu-1516 to Gly-1585. Zn(2+)-binding residues include Cys-1518, Cys-1520, Cys-1524, Cys-1531, Cys-1533, Cys-1567, Cys-1571, Cys-1573, and Cys-1577. One can recognise an SET domain in the interval Thr-1590–Lys-1750. S-adenosyl-L-methionine contacts are provided by residues Lys-1600–Trp-1602, Tyr-1643, Arg-1704, and Asn-1707–His-1708. Cys-1710 is a Zn(2+) binding site. The interval Asp-1756 to Asp-1794 is disordered. The segment covering Lys-1765 to Met-1776 has biased composition (basic residues). In terms of domain architecture, Post-SET spans Val-1800–Phe-1816. Cys-1804, Cys-1806, and Cys-1811 together coordinate Zn(2+).

This sequence belongs to the class V-like SAM-binding methyltransferase superfamily. Histone-lysine methyltransferase family. Suvar3-9 subfamily.

It localises to the nucleus. The protein localises to the chromosome. It catalyses the reaction N(6)-methyl-L-lysyl(9)-[histone H3] + S-adenosyl-L-methionine = N(6),N(6)-dimethyl-L-lysyl(9)-[histone H3] + S-adenosyl-L-homocysteine + H(+). The catalysed reaction is L-lysyl(9)-[histone H3] + S-adenosyl-L-methionine = N(6)-methyl-L-lysyl(9)-[histone H3] + S-adenosyl-L-homocysteine + H(+). Histone methyltransferase that specifically dimethylates histone H3 to form H3K9me2. H3K9me2 represents a specific tag for epigenetic transcriptional repression by recruiting HP1 proteins to methylated histones. Mainly functions in heterochromatin regions, thereby playing a central role in the establishment of constitutive heterochromatin at centromeric regions. The protein is Histone-lysine N-methyltransferase, H3 lysine-9 specific of Cryptococcus neoformans var. grubii serotype A (strain H99 / ATCC 208821 / CBS 10515 / FGSC 9487) (Filobasidiella neoformans var. grubii).